The primary structure comprises 433 residues: Histidinol dehydrogenase 2 (433 aa).

The NAD(+) site is built by tyrosine 130, glutamine 192, and asparagine 215. The substrate site is built by serine 238, glutamine 260, and histidine 263. Positions 260 and 263 each coordinate Zn(2+). Residues glutamate 328 and histidine 329 each act as proton acceptor in the active site. Histidine 329, aspartate 362, glutamate 416, and histidine 421 together coordinate substrate. A Zn(2+)-binding site is contributed by aspartate 362. Histidine 421 contacts Zn(2+).

The protein belongs to the histidinol dehydrogenase family. Zn(2+) is required as a cofactor.

It carries out the reaction L-histidinol + 2 NAD(+) + H2O = L-histidine + 2 NADH + 3 H(+). It functions in the pathway amino-acid biosynthesis; L-histidine biosynthesis; L-histidine from 5-phospho-alpha-D-ribose 1-diphosphate: step 9/9. Functionally, catalyzes the sequential NAD-dependent oxidations of L-histidinol to L-histidinaldehyde and then to L-histidine. The polypeptide is Histidinol dehydrogenase 2 (Trichormus variabilis (strain ATCC 29413 / PCC 7937) (Anabaena variabilis)).